The chain runs to 86 residues: Apolipoprotein C-I (86 aa).

Residues 1-26 (MRLFLSLPVLVVALLMILEGPGPAQG) form the signal peptide.

This sequence belongs to the apolipoprotein C1 family.

Its subcellular location is the secreted. In terms of biological role, inhibitor of lipoprotein binding to the low density lipoprotein (LDL) receptor, LDL receptor-related protein, and very low density lipoprotein (VLDL) receptor. Associates with high density lipoproteins (HDL) and the triacylglycerol-rich lipoproteins in the plasma and makes up about 10% of the protein of the VLDL and 2% of that of HDL. Appears to interfere directly with fatty acid uptake and is also the major plasma inhibitor of cholesteryl ester transfer protein (CETP). Binds free fatty acids and reduces their intracellular esterification. Modulates the interaction of APOE with beta-migrating VLDL and inhibits binding of beta-VLDL to the LDL receptor-related protein. The sequence is that of Apolipoprotein C-I (APOC1) from Aotus nancymaae (Ma's night monkey).